The primary structure comprises 51 residues: Large ribosomal subunit protein bL33 (51 aa).

It belongs to the bacterial ribosomal protein bL33 family.

In Idiomarina loihiensis (strain ATCC BAA-735 / DSM 15497 / L2-TR), this protein is Large ribosomal subunit protein bL33.